A 117-amino-acid chain; its full sequence is Thioredoxin (117 aa).

The Thioredoxin domain maps to 2 to 116 (AISLTEEDFV…FENIIKDFFG (115 aa)). Cysteines 40 and 43 form a disulfide.

This sequence belongs to the thioredoxin family.

Its function is as follows. Participates in various redox reactions through the reversible oxidation of its active center dithiol to a disulfide and catalyzes dithiol-disulfide exchange reactions. The chain is Thioredoxin (trxA) from Borreliella burgdorferi (strain ATCC 35210 / DSM 4680 / CIP 102532 / B31) (Borrelia burgdorferi).